The following is a 363-amino-acid chain: UDP-N-acetylglucosamine--N-acetylmuramyl-(pentapeptide) pyrophosphoryl-undecaprenol N-acetylglucosamine transferase (363 aa).

Residues 15-17 (TGG), N127, R169, S197, I251, 270-275 (ALTVSE), and Q296 contribute to the UDP-N-acetyl-alpha-D-glucosamine site.

It belongs to the glycosyltransferase 28 family. MurG subfamily.

It localises to the cell inner membrane. It catalyses the reaction di-trans,octa-cis-undecaprenyl diphospho-N-acetyl-alpha-D-muramoyl-L-alanyl-D-glutamyl-meso-2,6-diaminopimeloyl-D-alanyl-D-alanine + UDP-N-acetyl-alpha-D-glucosamine = di-trans,octa-cis-undecaprenyl diphospho-[N-acetyl-alpha-D-glucosaminyl-(1-&gt;4)]-N-acetyl-alpha-D-muramoyl-L-alanyl-D-glutamyl-meso-2,6-diaminopimeloyl-D-alanyl-D-alanine + UDP + H(+). The protein operates within cell wall biogenesis; peptidoglycan biosynthesis. Its function is as follows. Cell wall formation. Catalyzes the transfer of a GlcNAc subunit on undecaprenyl-pyrophosphoryl-MurNAc-pentapeptide (lipid intermediate I) to form undecaprenyl-pyrophosphoryl-MurNAc-(pentapeptide)GlcNAc (lipid intermediate II). The sequence is that of UDP-N-acetylglucosamine--N-acetylmuramyl-(pentapeptide) pyrophosphoryl-undecaprenol N-acetylglucosamine transferase from Dichelobacter nodosus (strain VCS1703A).